The sequence spans 408 residues: MMDNDNSLNKRPTFKRALRNISMTSIFITMMLIWLLLSVTSVLTLKQYAQKNLALTAATMTYSLEAAVVFADGPAATETLAALGQQGQFSTAEVRDKQQNILASWHYTRKDPGDTFSNFISHWLFPAPIIQPIRHNGETIGEVRLTARDSSISHFIWFSLAVLTGCILLASGIAITLTRHLHNGLVEALKNITDVVHDVRSNRNFSRRVSEERIAEFHRFALDFNSLLDEMEEWQLRLQAKNAQLLRTALHDPLTGLANRAAFRSGINTLMNNSDARKTSALLFLDGDNFKYINDTWGHATGDRVLIEIAKRLAEFGGLRHKAYRLGGDEFAMVLYDVQSESEVQQICSALTQIFNLPFDLHNGHQTTMTLSIGYAMTIEHASAEKLQELADHNMYQAKHQRAEKLVR.

At Met1–Thr24 the chain is on the cytoplasmic side. The helical transmembrane segment at Ser25–Leu45 threads the bilayer. Residues Lys46–Asn52 lie on the Periplasmic side of the membrane. A helical transmembrane segment spans residues Leu53–Gly73. The Cytoplasmic segment spans residues Pro74–Pro112. The helical transmembrane segment at Gly113–Ile133 threads the bilayer. Over Arg134 to His154 the chain is Periplasmic. Residues Phe155–Ile175 form a helical membrane-spanning segment. The Cytoplasmic segment spans residues Thr176–Arg408. Residues Asn183–Leu236 enclose the HAMP domain. One can recognise a GGDEF domain in the interval Lys278–Arg408. Residue Asp286 participates in Mg(2+) binding. Residues Asn294, His299, and Asp303 each contribute to the substrate site. Asp329 contributes to the Mg(2+) binding site. Asp329 functions as the Proton acceptor in the catalytic mechanism.

In terms of assembly, homodimer. Interacts with the cell division proteins FtsZ and ZipA. Mg(2+) is required as a cofactor.

It is found in the cell inner membrane. It carries out the reaction 2 GTP = 3',3'-c-di-GMP + 2 diphosphate. The protein operates within purine metabolism; 3',5'-cyclic di-GMP biosynthesis. With respect to regulation, inhibited by YfiR, which prevents relocation to the midcell. A reductive stress signal is required to inactivate YfiR and turn on the DGC activity of DgcN. Its function is as follows. Bifunctional protein that catalyzes the synthesis of cyclic-di-GMP (c-di-GMP) in response to reductive stress and then dynamically relocates to the division site to arrest cell division in response to envelope stress. In the presence of high intracellular c-di-GMP levels, and in response to envelope stress, interacts with cell division proteins and halts cell division, without disassembling the Z ring, but by blocking its further progress toward cytokinesis. Part of a network that regulates cell motility by altering levels of c-di-GMP. The protein is Diguanylate cyclase DgcN of Escherichia coli (strain K12).